The primary structure comprises 224 residues: MFPKINTIDPYISLRLFEVKPKYVGYSSVDARNQSFAIHDIKNYEKFSNAGLFYTSPTEITCYCCGMKFCNWLYEKHPLQVHGFWSRNCGFMRATLGIIGLKKMIDSYNDYYNNEVFVKHKNRVYTHKKLEDMGFSKPFMQFILANAFIPPYRKYIHKIILNDRYFTFKFAAHLLSFHKVNLDNQTTYCMTCGIEPIKKDENFCNACKTLNYKHYKTLNFSVKL.

One copy of the BIR repeat lies at 29–92 (VDARNQSFAI…GFWSRNCGFM (64 aa)). Cys62, Cys65, His82, and Cys89 together coordinate Zn(2+). The segment at 189–207 (CMTCGIEPIKKDENFCNAC) adopts a C4-type zinc-finger fold.

This sequence belongs to the asfivirus IAP family. Interacts with subunit p17 of host CASP3.

Its subcellular location is the host cytoplasm. The protein localises to the virion. In terms of biological role, prevent apoptosis of host cell by inhibiting caspase-3/CASP3 activation to promote the viral replication. Also induces the activation of host NF-kappaB. This Ornithodoros (relapsing fever ticks) protein is Inhibitor of apoptosis protein.